We begin with the raw amino-acid sequence, 182 residues long: Troponin I, fast skeletal muscle (182 aa).

An N-acetylglycine modification is found at glycine 2. The involved in binding TNC stretch occupies residues 2 to 48 (GDEEKRNRAITARRQHLKSVMLQIAATELEKEESRRESEKQNYLSEH). Threonine 12 is subject to Phosphothreonine. A compositionally biased stretch (basic and acidic residues) spans 29-41 (ELEKEESRRESEK). Residues 29-53 (ELEKEESRRESEKQNYLSEHCPPLH) are disordered. The tract at residues 97–117 (NQKLFDLRGKFKRPPLRRVRM) is involved in binding TNC and actin. Residue serine 118 is modified to Phosphoserine.

Belongs to the troponin I family. In terms of assembly, binds to actin and tropomyosin.

Troponin I is the inhibitory subunit of troponin, the thin filament regulatory complex which confers calcium-sensitivity to striated muscle actomyosin ATPase activity. The chain is Troponin I, fast skeletal muscle (Tnni2) from Rattus norvegicus (Rat).